A 597-amino-acid chain; its full sequence is Nucleolar protein 58 (597 aa).

Residues Ile-285–Gly-410 enclose the Nop domain. Positions Ala-452–Glu-597 are disordered. Residues Lys-482–Lys-499 are compositionally biased toward basic residues. A compositionally biased stretch (basic and acidic residues) spans Ile-532–Ala-551. Positions Glu-552–Glu-561 are enriched in acidic residues. A compositionally biased stretch (basic residues) spans Lys-588 to Glu-597.

The protein belongs to the NOP5/NOP56 family.

The protein resides in the nucleus. It is found in the nucleolus. Its function is as follows. Required for pre-18S rRNA processing. May bind microtubules. The polypeptide is Nucleolar protein 58 (nop-58) (Neurospora crassa (strain ATCC 24698 / 74-OR23-1A / CBS 708.71 / DSM 1257 / FGSC 987)).